The primary structure comprises 203 residues: Large ribosomal subunit protein bL25 (203 aa).

The protein belongs to the bacterial ribosomal protein bL25 family. CTC subfamily. In terms of assembly, part of the 50S ribosomal subunit; part of the 5S rRNA/L5/L18/L25 subcomplex. Contacts the 5S rRNA. Binds to the 5S rRNA independently of L5 and L18.

This is one of the proteins that binds to the 5S RNA in the ribosome where it forms part of the central protuberance. This Wolbachia pipientis wMel protein is Large ribosomal subunit protein bL25.